Reading from the N-terminus, the 1357-residue chain is DNA-directed RNA polymerase subunit beta (1357 aa).

It belongs to the RNA polymerase beta chain family. As to quaternary structure, the RNAP catalytic core consists of 2 alpha, 1 beta, 1 beta' and 1 omega subunit. When a sigma factor is associated with the core the holoenzyme is formed, which can initiate transcription.

It carries out the reaction RNA(n) + a ribonucleoside 5'-triphosphate = RNA(n+1) + diphosphate. DNA-dependent RNA polymerase catalyzes the transcription of DNA into RNA using the four ribonucleoside triphosphates as substrates. This is DNA-directed RNA polymerase subunit beta from Pseudomonas syringae pv. tomato (strain ATCC BAA-871 / DC3000).